A 467-amino-acid chain; its full sequence is uncharacterized protein (467 aa).

9 Sel1-like repeats span residues 38-73 (PAAA…EQGH), 107-138 (PEAQ…KNNN), 139-172 (PHGQ…AQGL), 173-208 (PEAH…QQGY), 240-275 (PDAH…AERH), 276-311 (PEGL…EAGS), 343-378 (AERL…ELGH), 379-414 (SKAQ…AKKD), and 415-450 (SMAF…NNGY).

This is an uncharacterized protein from Neisseria meningitidis serogroup B (strain ATCC BAA-335 / MC58).